The chain runs to 60 residues: Large ribosomal subunit protein uL30 (60 aa).

It belongs to the universal ribosomal protein uL30 family. As to quaternary structure, part of the 50S ribosomal subunit.

In Leifsonia xyli subsp. xyli (strain CTCB07), this protein is Large ribosomal subunit protein uL30.